Reading from the N-terminus, the 383-residue chain is Chitinase-3-like protein 1 (383 aa).

The N-terminal stretch at 1 to 21 is a signal peptide; the sequence is MGLRASGTGFVVLVLLQSCAA. Residues 22-383 form the GH18 domain; that stretch reads YKLICYYTSW…SAVKDVLAEV (362 aa). Cysteine 26 and cysteine 51 are joined by a disulfide. N-linked (GlcNAc...) asparagine glycosylation is present at asparagine 60. Residues 70-71, 97-100, tyrosine 141, 204-207, and arginine 263 contribute to the chitin site; these read EW, GGWN, and LTYD. Cysteine 300 and cysteine 364 form a disulfide bridge. The interval 324-338 is important for AKT1 activation and IL8 production; that stretch reads QWVAYDDQESVKNKA. Position 352 (tryptophan 352) interacts with chitin. Asparagine 367 is a glycosylation site (N-linked (GlcNAc...) asparagine).

It belongs to the glycosyl hydrolase 18 family. Monomer.

It is found in the secreted. Its subcellular location is the extracellular space. The protein resides in the cytoplasm. It localises to the perinuclear region. The protein localises to the endoplasmic reticulum. Carbohydrate-binding lectin with a preference for chitin. Has no chitinase activity. May play a role in tissue remodeling and in the capacity of cells to respond to and cope with changes in their environment. Plays a role in T-helper cell type 2 (Th2) inflammatory response and IL-13-induced inflammation, regulating allergen sensitization, inflammatory cell apoptosis, dendritic cell accumulation and M2 macrophage differentiation. Facilitates invasion of pathogenic enteric bacteria into colonic mucosa and lymphoid organs. Mediates activation of AKT1 signaling pathway and subsequent IL8 production in colonic epithelial cells. Regulates antibacterial responses in lung by contributing to macrophage bacterial killing, controlling bacterial dissemination and augmenting host tolerance. Also regulates hyperoxia-induced injury, inflammation and epithelial apoptosis in lung. In Capra hircus (Goat), this protein is Chitinase-3-like protein 1 (CHI3L1).